The following is a 486-amino-acid chain: 2-hydroxymuconic semialdehyde dehydrogenase (486 aa).

Residues Glu-254 and Cys-288 contribute to the active site.

This sequence belongs to the aldehyde dehydrogenase family. In terms of assembly, homodimer.

It catalyses the reaction (2Z,4E)-2-hydroxy-6-oxohexa-2,4-dienoate + NAD(+) + H2O = (2Z,4E)-2-hydroxyhexa-2,4-dienedioate + NADH + 2 H(+). The protein operates within aromatic compound metabolism; benzoate degradation via hydroxylation. 2-hydroxymuconic acid semialdehyde can be converted to 2-hydroxypent-2,4-dienoate either directly by the action of 2-hydroxymuconic semialdehyde hydrolase (HMSH) or by the action of three sequential enzymes, the first of which is HMSD. Can oxidize not only 2-hydroxymuconic semialdehyde and its analogs but also benzaldehyde and its analogs. This Pseudomonas putida (Arthrobacter siderocapsulatus) protein is 2-hydroxymuconic semialdehyde dehydrogenase (xylG).